A 218-amino-acid chain; its full sequence is Adenylate kinase (218 aa).

10-15 (GAGKGT) serves as a coordination point for ATP. Residues 30–59 (STGDMLRAAVKAGTPLGIAAKKIMDEGGLV) form an NMP region. AMP contacts are provided by residues threonine 31, arginine 36, 57–59 (GLV), 85–88 (GFPR), and glutamine 92. The LID stretch occupies residues 122-159 (GRRVHPASGRTYHVKFNPPKVAGKDDLTGEELIQRDDD). Residues arginine 123 and 132 to 133 (TY) contribute to the ATP site. AMP is bound by residues arginine 156 and arginine 167. Glycine 203 lines the ATP pocket.

The protein belongs to the adenylate kinase family. Monomer.

The protein localises to the cytoplasm. The catalysed reaction is AMP + ATP = 2 ADP. It participates in purine metabolism; AMP biosynthesis via salvage pathway; AMP from ADP: step 1/1. Functionally, catalyzes the reversible transfer of the terminal phosphate group between ATP and AMP. Plays an important role in cellular energy homeostasis and in adenine nucleotide metabolism. The polypeptide is Adenylate kinase (Janthinobacterium sp. (strain Marseille) (Minibacterium massiliensis)).